The primary structure comprises 255 residues: Type III pantothenate kinase (255 aa).

6 to 13 serves as a coordination point for ATP; that stretch reads DIGNTNTV. Substrate is bound by residues Tyr-100 and 107-110; that span reads GADR. The active-site Proton acceptor is the Asp-109. K(+) is bound at residue Asp-129. Thr-132 lines the ATP pocket. Thr-185 contributes to the substrate binding site.

This sequence belongs to the type III pantothenate kinase family. Homodimer. The cofactor is NH4(+). It depends on K(+) as a cofactor.

The protein localises to the cytoplasm. The enzyme catalyses (R)-pantothenate + ATP = (R)-4'-phosphopantothenate + ADP + H(+). Its pathway is cofactor biosynthesis; coenzyme A biosynthesis; CoA from (R)-pantothenate: step 1/5. In terms of biological role, catalyzes the phosphorylation of pantothenate (Pan), the first step in CoA biosynthesis. The polypeptide is Type III pantothenate kinase (Desulfosudis oleivorans (strain DSM 6200 / JCM 39069 / Hxd3) (Desulfococcus oleovorans)).